A 582-amino-acid polypeptide reads, in one-letter code: MAARSWQDELAQQAEEGSARLREMLSVGLGFLRTELGLDLGLEPKRYPGWVILVGTGALGLLLLFLLGYGWAAACAGARKKRRSPPRKREEAAAVPAAAPDDLALLKNLRSEEQKKKNRKKLSEKPKPNGRTVEVAEGEAVRTPQSVTAKQPPEIDKKNEKSKKNKKKSKSDAKAVQNSSRHDGKEVDEGAWETKISHREKRQQRKRDKVLTDSGSLDSTIPGIENTITVTTEQLTTASFPVGSKKNKGDSHLNVQVSNFKSGKGDSTLQVSSGLNENLTVNGGGWNEKSVKLSSQISAGEEKWNSVSPASAGKRKTEPSAWSQDTGDANTNGKDWGRSWSDRSIFSGIGSTAEPVSQSTTSDYQWDVSRNQPYIDDEWSGLNGLSSADPNSDWNAPAEEWGNWVDEERASLLKSQEPIPDDQKVSDDDKEKGEGALPTGKSKKKKKKKKKQGEDNSTAQDTEELEKEIREDLPVNTSKTRPKQEKAFSLKTISTSDPAEVLVKNSQPIKTLPPATSTEPSVILSKSDSDKSSSQVPPILQETDKSKSNTKQNSVPPSQTKSETSWESPKQIKKKKKARRET.

At 1 to 48 (MAARSWQDELAQQAEEGSARLREMLSVGLGFLRTELGLDLGLEPKRYP) the chain is on the lumenal side. The segment at 1-71 (MAARSWQDEL…LLLFLLGYGW (71 aa)) is activation of NF-kappa-B. A helical membrane pass occupies residues 49 to 69 (GWVILVGTGALGLLLLFLLGY). Residues 70-582 (GWAAACAGAR…KKKKKARRET (513 aa)) are Cytoplasmic-facing. An interaction with BCCIP region spans residues 72 to 169 (AAACAGARKK…EKSKKNKKKS (98 aa)). The disordered stretch occupies residues 78–222 (ARKKRRSPPR…DSGSLDSTIP (145 aa)). Residues 93–106 (AAVPAAAPDDLALL) show a composition bias toward low complexity. The tract at residues 101–205 (DDLALLKNLR…ISHREKRQQR (105 aa)) is interaction with RELA. Positions 109–127 (LRSEEQKKKNRKKLSEKPK) are enriched in basic and acidic residues. Residue Thr-143 is modified to Phosphothreonine. The span at 160 to 169 (EKSKKNKKKS) shows a compositional bias: basic residues. Residue Ser-180 is modified to Phosphoserine. Over residues 198–208 (HREKRQQRKRD) the composition is skewed to basic residues. 2 positions are modified to phosphoserine: Ser-216 and Ser-251. The residue at position 264 (Lys-264) is an N6-acetyllysine. The tract at residues 280 to 582 (TVNGGGWNEK…KKKKKARRET (303 aa)) is disordered. Phosphoserine is present on residues Ser-298, Ser-306, Ser-308, Ser-311, Ser-323, Ser-339, Ser-344, and Ser-369. Over residues 320–333 (SAWSQDTGDANTNG) the composition is skewed to polar residues. Composition is skewed to polar residues over residues 354–372 (EPVS…SRNQ) and 383–394 (NGLSSADPNSDW). The interval 381-443 (GLNGLSSADP…EGALPTGKSK (63 aa)) is lung-homing for mammary tumors. Phosphoserine occurs at positions 415 and 426. The segment covering 421-434 (DDQKVSDDDKEKGE) has biased composition (basic and acidic residues). Positions 441–451 (KSKKKKKKKKK) are enriched in basic residues. A Phosphoserine modification is found at Ser-457. Thr-458 bears the Phosphothreonine mark. Phosphoserine occurs at positions 478, 494, and 496. Composition is skewed to polar residues over residues 504-520 (KNSQ…STEP) and 549-568 (NTKQ…SWES). The residue at position 568 (Ser-568) is a Phosphoserine. The segment covering 571–582 (QIKKKKKARRET) has biased composition (basic residues).

Interacts with BCCIP, CREBBP/CBP and RELA/p65. In terms of tissue distribution, widely expressed with highest levels in muscle-dominating organs such as skeletal muscle, heart, tongue and small intestine and in endocrine glands such as thyroid and adrenal gland. Overexpressed in various cancers including breast, brain, prostate, melanoma and glioblastoma multiforme.

The protein resides in the endoplasmic reticulum membrane. It localises to the nucleus membrane. Its subcellular location is the cell junction. It is found in the tight junction. The protein localises to the nucleus. The protein resides in the nucleolus. It localises to the cytoplasm. Its subcellular location is the perinuclear region. Down-regulates SLC1A2/EAAT2 promoter activity when expressed ectopically. Activates the nuclear factor kappa-B (NF-kappa-B) transcription factor. Promotes anchorage-independent growth of immortalized melanocytes and astrocytes which is a key component in tumor cell expansion. Promotes lung metastasis and also has an effect on bone and brain metastasis, possibly by enhancing the seeding of tumor cells to the target organ endothelium. Induces chemoresistance. In Homo sapiens (Human), this protein is Protein LYRIC (MTDH).